The chain runs to 237 residues: Ergosterol biosynthesis protein 29 (237 aa).

The helical transmembrane segment at 36-56 threads the bilayer; that stretch reads ITLFLIVVGTLAFFNELYITI.

It localises to the endoplasmic reticulum membrane. Functionally, part of the third module of ergosterol biosynthesis pathway that includes the late steps of the pathway. ERG29 regulates the activity of the iron-containing C4-methylsterol oxidase ERG25. The third module or late pathway involves the ergosterol synthesis itself through consecutive reactions that mainly occur in the endoplasmic reticulum (ER) membrane. Firstly, the squalene synthase ERG9 catalyzes the condensation of 2 farnesyl pyrophosphate moieties to form squalene, which is the precursor of all steroids. Squalene synthase is crucial for balancing the incorporation of farnesyl diphosphate (FPP) into sterol and nonsterol isoprene synthesis. Secondly, the squalene epoxidase ERG1 catalyzes the stereospecific oxidation of squalene to (S)-2,3-epoxysqualene, which is considered to be a rate-limiting enzyme in steroid biosynthesis. Then, the lanosterol synthase ERG7 catalyzes the cyclization of (S)-2,3 oxidosqualene to lanosterol, a reaction that forms the sterol core. In the next steps, lanosterol is transformed to zymosterol through a complex process involving various demethylation, reduction and desaturation reactions. The lanosterol 14-alpha-demethylase ERG11 (also known as CYP51) catalyzes C14-demethylation of lanosterol to produce 4,4'-dimethyl cholesta-8,14,24-triene-3-beta-ol, which is critical for ergosterol biosynthesis. The C-14 reductase ERG24 reduces the C14=C15 double bond of 4,4-dimethyl-cholesta-8,14,24-trienol to produce 4,4-dimethyl-cholesta-8,24-dienol. 4,4-dimethyl-cholesta-8,24-dienol is substrate of the C-4 demethylation complex ERG25-ERG26-ERG27 in which ERG25 catalyzes the three-step monooxygenation required for the demethylation of 4,4-dimethyl and 4alpha-methylsterols, ERG26 catalyzes the oxidative decarboxylation that results in a reduction of the 3-beta-hydroxy group at the C-3 carbon to an oxo group, and ERG27 is responsible for the reduction of the keto group on the C-3. ERG28 has a role as a scaffold to help anchor ERG25, ERG26 and ERG27 to the endoplasmic reticulum and ERG29 regulates the activity of the iron-containing C4-methylsterol oxidase ERG25. Then, the sterol 24-C-methyltransferase ERG6 catalyzes the methyl transfer from S-adenosyl-methionine to the C-24 of zymosterol to form fecosterol. The C-8 sterol isomerase ERG2 catalyzes the reaction which results in unsaturation at C-7 in the B ring of sterols and thus converts fecosterol to episterol. The sterol-C5-desaturase ERG3 then catalyzes the introduction of a C-5 double bond in the B ring to produce 5-dehydroepisterol. The C-22 sterol desaturase ERG5 further converts 5-dehydroepisterol into ergosta-5,7,22,24(28)-tetraen-3beta-ol by forming the C-22(23) double bond in the sterol side chain. Finally, ergosta-5,7,22,24(28)-tetraen-3beta-ol is substrate of the C-24(28) sterol reductase ERG4 to produce ergosterol. Its function is as follows. Plays a role in maintaining mitochondrial and plasma membrane integrity and consequently impacting the iron homeostasis, respiratory metabolism and antioxidant response. In Saccharomyces cerevisiae (strain ATCC 204508 / S288c) (Baker's yeast), this protein is Ergosterol biosynthesis protein 29.